The following is a 726-amino-acid chain: Serine/threonine-protein kinase PKH3 (726 aa).

The Protein kinase domain maps to 10 to 271 (FLFREELGHG…LEQIKKHKWF (262 aa)). ATP contacts are provided by residues 16–24 (LGHGSYSTV) and lysine 39. Residue aspartate 136 is the Proton acceptor of the active site. Residues 629–679 (QDIPLPSPAKSSSNSGVSEPISKIPPRQLVSASEQSHKAKSEAHTKKANSY) form a disordered region. A compositionally biased stretch (basic and acidic residues) spans 663–673 (QSHKAKSEAHT).

Belongs to the protein kinase superfamily. Ser/Thr protein kinase family.

The catalysed reaction is L-seryl-[protein] + ATP = O-phospho-L-seryl-[protein] + ADP + H(+). It carries out the reaction L-threonyl-[protein] + ATP = O-phospho-L-threonyl-[protein] + ADP + H(+). Serine/threonine-protein kinase. The polypeptide is Serine/threonine-protein kinase PKH3 (PKH3) (Eremothecium gossypii (strain ATCC 10895 / CBS 109.51 / FGSC 9923 / NRRL Y-1056) (Yeast)).